A 299-amino-acid chain; its full sequence is MSTNKRLRIAMQKKGRLSDESQELLKQCGVKINLQGQKLIAYAENLPIDILRVRDDDIPGLVFDGVVDLGIIGENVLEEEELTRTAAGDKVEYKMLRRLEFGGCRLSLAVDSDVEFDGPESLSDCRIATSYPQLLKRYMAEQGVPFKSILLNGSVEVAPRAGLADAICDLVSSGATLEANGLKEVEVIYRSKACLIQRKEPLSEEKQALVDKILTRIQGVQQADESKYIMLHAPKDKLEEITALLPGVENPTILPLAHDDTKVAVHVVSQENLFWETMEQLKEKGASSVLVLPIEKMLA.

Belongs to the ATP phosphoribosyltransferase family. Long subfamily. The cofactor is Mg(2+).

The protein resides in the cytoplasm. It catalyses the reaction 1-(5-phospho-beta-D-ribosyl)-ATP + diphosphate = 5-phospho-alpha-D-ribose 1-diphosphate + ATP. It functions in the pathway amino-acid biosynthesis; L-histidine biosynthesis; L-histidine from 5-phospho-alpha-D-ribose 1-diphosphate: step 1/9. Feedback inhibited by histidine. Catalyzes the condensation of ATP and 5-phosphoribose 1-diphosphate to form N'-(5'-phosphoribosyl)-ATP (PR-ATP). Has a crucial role in the pathway because the rate of histidine biosynthesis seems to be controlled primarily by regulation of HisG enzymatic activity. This chain is ATP phosphoribosyltransferase, found in Mannheimia succiniciproducens (strain KCTC 0769BP / MBEL55E).